A 254-amino-acid polypeptide reads, in one-letter code: Arginine/ornithine transport ATP-binding protein AotP (254 aa).

One can recognise an ABC transporter domain in the interval 4–249 (LEVQDLHKRY…PQSDRLKQFL (246 aa)). 36–43 (GSSGSGKS) serves as a coordination point for ATP.

The protein belongs to the ABC transporter superfamily.

Its subcellular location is the cell inner membrane. Its function is as follows. Part of the arginine-inducible binding-protein-dependent transport system for arginine and ornithine. Probably responsible for energy coupling to the transport system. The polypeptide is Arginine/ornithine transport ATP-binding protein AotP (aotP) (Pseudomonas aeruginosa (strain ATCC 15692 / DSM 22644 / CIP 104116 / JCM 14847 / LMG 12228 / 1C / PRS 101 / PAO1)).